We begin with the raw amino-acid sequence, 96 residues long: Defensin-like protein 151 (96 aa).

The signal sequence occupies residues 1 to 29 (MKKPSQLSATILTIFVILAIGVMVKETLG). 4 cysteine pairs are disulfide-bonded: cysteine 35–cysteine 88, cysteine 48–cysteine 68, cysteine 53–cysteine 82, and cysteine 57–cysteine 84.

It belongs to the DEFL family.

It localises to the secreted. This Arabidopsis thaliana (Mouse-ear cress) protein is Defensin-like protein 151 (LCR17).